The chain runs to 491 residues: D-xylose-proton symporter (491 aa).

Over 1–9 (MNTQYNSSY) the chain is Cytoplasmic. The chain crosses the membrane as a helical span at residues 10–30 (IFSITLVATLGGLLFGYDTAV). Residues 31–55 (ISGTVESLNTVFVAPQNLSESAANS) lie on the Periplasmic side of the membrane. Residues 56-76 (LLGFCVASALIGCIIGGALGG) traverse the membrane as a helical segment. Residues 77-89 (YCSNRFGRRDSLK) lie on the Cytoplasmic side of the membrane. Residues 90–110 (IAAVLFFISGVGSAWPELGFT) traverse the membrane as a helical segment. Residues 111-133 (SINPDNTVPVYLAGYVPEFVIYR) lie on the Periplasmic side of the membrane. A helical transmembrane segment spans residues 134 to 154 (IIGGIGVGLASMLSPMYIAEL). Over 155 to 165 (APAHIRGKLVS) the chain is Cytoplasmic. Residues 166 to 186 (FNQFAIIFGQLLVYCVNYFIA) traverse the membrane as a helical segment. Position 168 (Gln168) interacts with beta-D-xylose. Topologically, residues 187-200 (RSGDASWLNTDGWR) are periplasmic. Residues 201–221 (YMFASECIPALLFLMLLYTVP) traverse the membrane as a helical segment. At 222–272 (ESPRWLMSRGKQEQAEGILRKIMGNTLATQAVQEIKHSLDHGRKTGGRLLM) the chain is on the cytoplasmic side. Residues 273–293 (FGVGVIVIGVMLSIFQQFVGI) traverse the membrane as a helical segment. Beta-D-xylose is bound by residues 288–289 (QQ) and Asn294. The Periplasmic segment spans residues 294-312 (NVVLYYAPEVFKTLGASTD). A helical transmembrane segment spans residues 313–333 (IALLQTIIVGVINLTFTVLAI). Residues 334–343 (MTVDKFGRKP) lie on the Cytoplasmic side of the membrane. The helical transmembrane segment at 344 to 364 (LQIIGALGMAIGMFSLGTAFY) threads the bilayer. Residues 365–369 (TQAPG) are Periplasmic-facing. The helical transmembrane segment at 370–390 (IVALLSMLFYVAAFAMSWGPV) threads the bilayer. The Cytoplasmic portion of the chain corresponds to 391 to 407 (CWVLLSEIFPNAIRGKA). Residues Trp392 and Gln415 each contribute to the beta-D-xylose site. Residues 408-428 (LAIAVAAQWLANYFVSWTFPM) form a helical membrane-spanning segment. Residues 429-442 (MDKNSWLVAHFHNG) are Periplasmic-facing. A helical transmembrane segment spans residues 443–463 (FSYWIYGCMGVLAALFMWKFV). Residues 464–491 (PETKGKTLEELEALWEPETKKTQQTATL) are Cytoplasmic-facing.

This sequence belongs to the major facilitator superfamily. Sugar transporter (TC 2.A.1.1) family.

It localises to the cell inner membrane. The catalysed reaction is D-xylose(in) + H(+)(in) = D-xylose(out) + H(+)(out). Uptake of D-xylose across the boundary membrane with the concomitant transport of protons into the cell (symport system). The protein is D-xylose-proton symporter (xylE) of Escherichia coli O157:H7.